The following is a 249-amino-acid chain: Nicotinamide/nicotinic acid mononucleotide adenylyltransferase (249 aa).

Residues Ser-34 and Phe-35 each coordinate NAD(+). ATP is bound by residues His-42 and Lys-75. 6 residues coordinate NAD(+): Thr-112, Gly-141, Asp-143, Trp-154, Arg-173, and Asn-204. An ATP-binding site is contributed by 209–210; that stretch reads SR.

It belongs to the eukaryotic NMN adenylyltransferase family. The cofactor is a divalent metal cation.

The catalysed reaction is beta-nicotinamide D-ribonucleotide + ATP + H(+) = diphosphate + NAD(+). The enzyme catalyses nicotinate beta-D-ribonucleotide + ATP + H(+) = deamido-NAD(+) + diphosphate. The protein operates within cofactor biosynthesis; NAD(+) biosynthesis; deamido-NAD(+) from nicotinate D-ribonucleotide: step 1/1. It functions in the pathway cofactor biosynthesis; NAD(+) biosynthesis; NAD(+) from nicotinamide D-ribonucleotide: step 1/1. Its function is as follows. Catalyzes the formation of NAD(+) from nicotinamide mononucleotide (NMN) and ATP. Can also use the deamidated form; nicotinic acid mononucleotide (NaMN) as substrate. This chain is Nicotinamide/nicotinic acid mononucleotide adenylyltransferase, found in Oryza sativa subsp. japonica (Rice).